The following is a 158-amino-acid chain: Regulator of sigma D (158 aa).

Belongs to the Rsd/AlgQ family. As to quaternary structure, interacts with RpoD.

It localises to the cytoplasm. Binds RpoD and negatively regulates RpoD-mediated transcription activation by preventing the interaction between the primary sigma factor RpoD with the catalytic core of the RNA polymerase and with promoter DNA. May be involved in replacement of the RNA polymerase sigma subunit from RpoD to RpoS during the transition from exponential growth to the stationary phase. In Escherichia coli (strain UTI89 / UPEC), this protein is Regulator of sigma D.